Consider the following 308-residue polypeptide: Cysteine synthase (308 aa).

The residue at position 45 (Lys45) is an N6-(pyridoxal phosphate)lysine. Pyridoxal 5'-phosphate is bound by residues Asn75, Gly179–Thr183, and Ser267.

It belongs to the cysteine synthase/cystathionine beta-synthase family. In terms of assembly, homodimer. Forms CymR(2):CysK(2) or CymR(4):CysK(4) complexes in the absence of O-acetylserine. Requires pyridoxal 5'-phosphate as cofactor.

It carries out the reaction O-acetyl-L-serine + hydrogen sulfide = L-cysteine + acetate. It functions in the pathway amino-acid biosynthesis; L-cysteine biosynthesis; L-cysteine from L-serine: step 2/2. Its function is as follows. Catalyzes the conversion of O-acetylserine to cysteine. Also acts as a sensor of cysteine availability in the signal transduction pathway modulating CymR activity. When cysteine is present, the pool of O-acetylserine (OAS) is low, which leads to the formation of a CymR-CysK complex and transcriptional repression of the CymR regulon occurs. In the absence of cysteine, the OAS pool is high and the CymR-CysK complex is mostly dissociated, leading to a faster dissociation of CymR from its DNA targets and the lifting of CymR-dependent repression. The chain is Cysteine synthase (cysK) from Bacillus subtilis (strain 168).